The sequence spans 213 residues: Thiamine-phosphate synthase (213 aa).

4-amino-2-methyl-5-(diphosphooxymethyl)pyrimidine contacts are provided by residues 39 to 43 (QLREK) and Asn71. Asp72 and Asp91 together coordinate Mg(2+). 4-amino-2-methyl-5-(diphosphooxymethyl)pyrimidine is bound at residue Ser110. A 2-[(2R,5Z)-2-carboxy-4-methylthiazol-5(2H)-ylidene]ethyl phosphate-binding site is contributed by 136–138 (TGT). Lys139 provides a ligand contact to 4-amino-2-methyl-5-(diphosphooxymethyl)pyrimidine. 2-[(2R,5Z)-2-carboxy-4-methylthiazol-5(2H)-ylidene]ethyl phosphate contacts are provided by residues Gly166 and 186-187 (VS).

Belongs to the thiamine-phosphate synthase family. It depends on Mg(2+) as a cofactor.

The enzyme catalyses 2-[(2R,5Z)-2-carboxy-4-methylthiazol-5(2H)-ylidene]ethyl phosphate + 4-amino-2-methyl-5-(diphosphooxymethyl)pyrimidine + 2 H(+) = thiamine phosphate + CO2 + diphosphate. The catalysed reaction is 2-(2-carboxy-4-methylthiazol-5-yl)ethyl phosphate + 4-amino-2-methyl-5-(diphosphooxymethyl)pyrimidine + 2 H(+) = thiamine phosphate + CO2 + diphosphate. It carries out the reaction 4-methyl-5-(2-phosphooxyethyl)-thiazole + 4-amino-2-methyl-5-(diphosphooxymethyl)pyrimidine + H(+) = thiamine phosphate + diphosphate. It participates in cofactor biosynthesis; thiamine diphosphate biosynthesis; thiamine phosphate from 4-amino-2-methyl-5-diphosphomethylpyrimidine and 4-methyl-5-(2-phosphoethyl)-thiazole: step 1/1. Condenses 4-methyl-5-(beta-hydroxyethyl)thiazole monophosphate (THZ-P) and 2-methyl-4-amino-5-hydroxymethyl pyrimidine pyrophosphate (HMP-PP) to form thiamine monophosphate (TMP). This chain is Thiamine-phosphate synthase, found in Clostridium botulinum (strain Eklund 17B / Type B).